Consider the following 488-residue polypeptide: Glutamyl-tRNA(Gln) amidotransferase subunit A (488 aa).

Residues Lys-77 and Ser-152 each act as charge relay system in the active site. Ser-176 serves as the catalytic Acyl-ester intermediate.

This sequence belongs to the amidase family. GatA subfamily. As to quaternary structure, heterotrimer of A, B and C subunits.

The catalysed reaction is L-glutamyl-tRNA(Gln) + L-glutamine + ATP + H2O = L-glutaminyl-tRNA(Gln) + L-glutamate + ADP + phosphate + H(+). In terms of biological role, allows the formation of correctly charged Gln-tRNA(Gln) through the transamidation of misacylated Glu-tRNA(Gln) in organisms which lack glutaminyl-tRNA synthetase. The reaction takes place in the presence of glutamine and ATP through an activated gamma-phospho-Glu-tRNA(Gln). The protein is Glutamyl-tRNA(Gln) amidotransferase subunit A of Streptococcus pneumoniae (strain ATCC 700669 / Spain 23F-1).